Here is a 377-residue protein sequence, read N- to C-terminus: Alanine racemase (377 aa).

Catalysis depends on Lys-37, which acts as the Proton acceptor; specific for D-alanine. Lys-37 carries the post-translational modification N6-(pyridoxal phosphate)lysine. Residue Arg-135 coordinates substrate. Tyr-271 functions as the Proton acceptor; specific for L-alanine in the catalytic mechanism. Met-319 is a binding site for substrate.

It belongs to the alanine racemase family. It depends on pyridoxal 5'-phosphate as a cofactor.

It catalyses the reaction L-alanine = D-alanine. Its pathway is amino-acid biosynthesis; D-alanine biosynthesis; D-alanine from L-alanine: step 1/1. Its function is as follows. Catalyzes the interconversion of L-alanine and D-alanine. May also act on other amino acids. The protein is Alanine racemase (alr) of Helicobacter pylori (strain Shi470).